The chain runs to 193 residues: Probable oligoribonuclease (193 aa).

One can recognise an Exonuclease domain in the interval 15-177; it reads IIWIDCEMTG…DDIMESIAEL (163 aa). The active site involves Tyr136.

Belongs to the oligoribonuclease family.

Its function is as follows. 3'-to-5' exoribonuclease specific for small oligoribonucleotides. This chain is Probable oligoribonuclease, found in Caenorhabditis elegans.